The chain runs to 83 residues: U5-theraphotoxin-Hs1a 5 (83 aa).

Residues 1–21 (MKTSMFLTLTGLVLLFVVCYA) form the signal peptide. Residues 22–49 (SESEEKEFPKELPSSIFAADSDFKVEER) constitute a propeptide that is removed on maturation. Cystine bridges form between Cys-51/Cys-63, Cys-56/Cys-68, and Cys-62/Cys-75.

It belongs to the neurotoxin 10 (Hwtx-1) family. 51 (Hntx-8) subfamily. Hntx-8 sub-subfamily. Expressed by the venom gland.

Its subcellular location is the secreted. Agglutinates erythrocytes. This Cyriopagopus schmidti (Chinese bird spider) protein is U5-theraphotoxin-Hs1a 5.